The following is a 61-amino-acid chain: Metallothionein-II, hippocampal (61 aa).

Position 1 is an N-acetylmethionine (Met-1). A beta region spans residues 1 to 29; the sequence is MDPNCSCATGGSCTCANSCTCKACKCASC. Positions 5, 7, 13, 15, 19, 21, 24, 26, 29, 33, 34, 36, 37, 41, 44, 48, 50, 57, 59, and 60 each coordinate a divalent metal cation. The tract at residues 30 to 61 is alpha; the sequence is KKSCCSCCPVGCAKCAQGCICKGASDKCSCCA.

The protein belongs to the metallothionein superfamily. Type 1 family.

Metallothioneins have a high content of cysteine residues that bind various heavy metals; these proteins are transcriptionally regulated by both heavy metals and glucocorticoids. This isoform may play a role in regulating the transport, accumulation, and compartmentation of zinc in the hippocampus. In Bos taurus (Bovine), this protein is Metallothionein-II, hippocampal.